Here is a 509-residue protein sequence, read N- to C-terminus: 4-aminobutyrate aminotransferase (509 aa).

166 to 167 (GS) contributes to the pyridoxal 5'-phosphate binding site. Arg223 is a binding site for substrate. Residue Lys363 is modified to N6-(pyridoxal phosphate)lysine. Thr387 serves as a coordination point for pyridoxal 5'-phosphate.

Belongs to the class-III pyridoxal-phosphate-dependent aminotransferase family. In terms of assembly, homodimer. Pyridoxal 5'-phosphate is required as a cofactor.

It is found in the cytoplasm. It carries out the reaction 4-aminobutanoate + 2-oxoglutarate = succinate semialdehyde + L-glutamate. In terms of biological role, deaminates gamma-aminobutyric acid (GABA) to succinate-semialdehyde, which in turn is converted to succinate by the succinate semialdehyde dehydrogenase. Not required for the utilization of GABA as nitrogen source. The chain is 4-aminobutyrate aminotransferase (GATA) from Mycosarcoma maydis (Corn smut fungus).